The sequence spans 177 residues: MRITISGSPGSGTTTLGRSIAEKYSYRYVSAGEVFRGLAKERNMDLAAFGKIAETDPAIDLEIDARQKEIGESSDDIILEGRLAGWMVENADLKILLCASPECRSTRIAAREGLTEKQAFEMTIEREACEAGRYMEYYEIDILDFSPYDLILNSETFSANELFAIVDAAVSSLLKRE.

7–15 is a binding site for ATP; the sequence is GSPGSGTTT.

Belongs to the cytidylate kinase family. Type 2 subfamily.

The protein resides in the cytoplasm. It catalyses the reaction CMP + ATP = CDP + ADP. The catalysed reaction is dCMP + ATP = dCDP + ADP. The sequence is that of Cytidylate kinase from Methanocorpusculum labreanum (strain ATCC 43576 / DSM 4855 / Z).